Reading from the N-terminus, the 251-residue chain is 2,3-bisphosphoglycerate-dependent phosphoglycerate mutase (251 aa).

Substrate is bound by residues 11-18 (RHGESDWN), 24-25 (TG), Arg63, 90-93 (ERHY), Lys101, 117-118 (RR), and 184-185 (GN). His12 acts as the Tele-phosphohistidine intermediate in catalysis. The Proton donor/acceptor role is filled by Glu90.

This sequence belongs to the phosphoglycerate mutase family. BPG-dependent PGAM subfamily.

The catalysed reaction is (2R)-2-phosphoglycerate = (2R)-3-phosphoglycerate. The protein operates within carbohydrate degradation; glycolysis; pyruvate from D-glyceraldehyde 3-phosphate: step 3/5. Catalyzes the interconversion of 2-phosphoglycerate and 3-phosphoglycerate. In Mycobacterium marinum (strain ATCC BAA-535 / M), this protein is 2,3-bisphosphoglycerate-dependent phosphoglycerate mutase.